The following is an 836-amino-acid chain: Protein O-mannosyl-transferase tmtc2 (836 aa).

A helical membrane pass occupies residues 1 to 21 (MIAELLSSALGLLLYLNTLGA). The Extracellular segment spans residues 22 to 77 (DFCYDDSRAIKTNQDLLPETPWNHIFFNDFWGTLLTHSGSHKSYRPLCTLSFRLNY). Residues 78-98 (LFGGLDPWNYHLVNVLLHSAV) form a helical membrane-spanning segment. Over 99 to 107 (TGLFTNLCK) the chain is Cytoplasmic. The chain crosses the membrane as a helical span at residues 108–128 (ALFGSGCWTLIAGLLFASHPI). Topologically, residues 129 to 132 (HTEA) are extracellular. A helical transmembrane segment spans residues 133–153 (VSGIVGRADVGSGLFFLLSLL). At 154-164 (CYMKHCSTRGY) the chain is on the cytoplasmic side. Residues 165 to 185 (SLSSWCWILCAGFWAACSMLW) traverse the membrane as a helical segment. The Extracellular segment spans residues 186–188 (KEQ). Residues 189–209 (GVTVLAVSAVYDVFVFHKLKM) traverse the membrane as a helical segment. The Cytoplasmic segment spans residues 210–220 (NQIISVVFKEK). Residues 221-241 (NVSFFFSVGLLFAWGVILLGA) traverse the membrane as a helical segment. Topologically, residues 242 to 312 (RFYWMGNTPP…KTITDWRNIH (71 aa)) are extracellular. A helical transmembrane segment spans residues 313-333 (TVAFYILLILLAYSSLKGSAI). Over 334–392 (KRDCNGKVFMNGKQNTNGHSCQSDLEHKNAEQNPVIASKLENGVKHHNSHEMQLPSTEN) the chain is Cytoplasmic. A helical transmembrane segment spans residues 393-413 (IVVLALSLLIVPFVPASNLFF). Tyr414 is a topological domain (extracellular). The chain crosses the membrane as a helical span at residues 415-435 (VGFVIAERVLYIPSMGFCLLV). Residues 436 to 449 (TVGARALYIKAQKN) lie on the Cytoplasmic side of the membrane. Residues 450–470 (ILKNLLFYATAALIVFYGLKT) form a helical membrane-spanning segment. Residues 471 to 836 (VVRNGDWKNE…EKQGLKNSKT (366 aa)) lie on the Extracellular side of the membrane. 9 TPR repeats span residues 493-526 (AKAW…RSNM), 527-560 (ADML…RPTL), 561-594 (ASGY…PDEN), 606-639 (TSCL…MPRQ), 643-676 (QSLY…KPDH), 677-710 (IPAH…DPNK), 711-744 (GNCY…DSSE), 745-778 (FDVV…RQNY), and 779-812 (PAAL…KPDD).

It belongs to the TMTC family.

It is found in the membrane. Its subcellular location is the endoplasmic reticulum. The catalysed reaction is a di-trans,poly-cis-dolichyl beta-D-mannosyl phosphate + L-seryl-[protein] = 3-O-(alpha-D-mannosyl)-L-seryl-[protein] + a di-trans,poly-cis-dolichyl phosphate + H(+). It carries out the reaction a di-trans,poly-cis-dolichyl beta-D-mannosyl phosphate + L-threonyl-[protein] = 3-O-(alpha-D-mannosyl)-L-threonyl-[protein] + a di-trans,poly-cis-dolichyl phosphate + H(+). Its pathway is protein modification; protein glycosylation. Functionally, transfers mannosyl residues to the hydroxyl group of serine or threonine residues. The sequence is that of Protein O-mannosyl-transferase tmtc2 (tmtc2) from Xenopus laevis (African clawed frog).